We begin with the raw amino-acid sequence, 268 residues long: Mediator of RNA polymerase II transcription subunit 8 (268 aa).

Positions 1–28 form a coiled coil; the sequence is MQREEKQLEASLDALLSQVADLKNSLGS. Phosphoserine is present on Ser-82. The stretch at 133 to 163 forms a coiled coil; sequence ADAAQKQIQSLNKMCSNLLEKISKEERESES. The interval 142–151 is interaction with the Elongin BC complex; that stretch reads SLNKMCSNLL. Disordered stretches follow at residues 156–176 and 193–268; these read KEER…FNPT and NWRP…PYQR. A compositionally biased stretch (gly residues) spans 200 to 209; sequence SGPGQAGQPG. Positions 218-235 are enriched in polar residues; that stretch reads SGLQQVQMAGAPSQQQPM.

It belongs to the Mediator complex subunit 8 family. As to quaternary structure, component of the Mediator complex, which is composed of MED1, MED4, MED6, MED7, MED8, MED9, MED10, MED11, MED12, MED13, MED13L, MED14, MED15, MED16, MED17, MED18, MED19, MED20, MED21, MED22, MED23, MED24, MED25, MED26, MED27, MED29, MED30, MED31, CCNC, CDK8 and CDC2L6/CDK11. The MED12, MED13, CCNC and CDK8 subunits form a distinct module termed the CDK8 module. Mediator containing the CDK8 module is less active than Mediator lacking this module in supporting transcriptional activation. Individual preparations of the Mediator complex lacking one or more distinct subunits have been variously termed ARC, CRSP, DRIP, PC2, SMCC and TRAP. May be part of a multisubunit E3 ubiquitin-protein ligase complex with the elongin BC complex (ELOB and ELOC), CUL2 and RBX1.

The protein resides in the nucleus. Its pathway is protein modification; protein ubiquitination. Component of the Mediator complex, a coactivator involved in the regulated transcription of nearly all RNA polymerase II-dependent genes. Mediator functions as a bridge to convey information from gene-specific regulatory proteins to the basal RNA polymerase II transcription machinery. Mediator is recruited to promoters by direct interactions with regulatory proteins and serves as a scaffold for the assembly of a functional preinitiation complex with RNA polymerase II and the general transcription factors. May play a role as a target recruitment subunit in E3 ubiquitin-protein ligase complexes and thus in ubiquitination and subsequent proteasomal degradation of target proteins. The protein is Mediator of RNA polymerase II transcription subunit 8 (MED8) of Homo sapiens (Human).